A 795-amino-acid polypeptide reads, in one-letter code: Phenylalanine--tRNA ligase beta subunit (795 aa).

The tRNA-binding domain occupies 39 to 148 (AGSFHGVVVG…ADAPIGTDIR (110 aa)). The B5 domain occupies 401-476 (PKRATITLRR…RVYGYNNIPD (76 aa)). Mg(2+)-binding residues include aspartate 454, aspartate 460, glutamate 463, and glutamate 464. Residues 701-794 (SRFPANRRDI…LKERFQASLR (94 aa)) form the FDX-ACB domain.

The protein belongs to the phenylalanyl-tRNA synthetase beta subunit family. Type 1 subfamily. Tetramer of two alpha and two beta subunits. Mg(2+) serves as cofactor.

It is found in the cytoplasm. The catalysed reaction is tRNA(Phe) + L-phenylalanine + ATP = L-phenylalanyl-tRNA(Phe) + AMP + diphosphate + H(+). The sequence is that of Phenylalanine--tRNA ligase beta subunit from Shigella boydii serotype 4 (strain Sb227).